Consider the following 268-residue polypeptide: Shikimate dehydrogenase (NADP(+)) (268 aa).

Shikimate contacts are provided by residues 14-16 (SKS) and Thr61. Catalysis depends on Lys65, which acts as the Proton acceptor. The shikimate site is built by Asn86 and Asp102. NADP(+) contacts are provided by residues 126-130 (GAGGA), 149-154 (NRTFLK), and Met213. Residue Tyr215 participates in shikimate binding. Gly238 serves as a coordination point for NADP(+).

This sequence belongs to the shikimate dehydrogenase family. As to quaternary structure, homodimer.

It carries out the reaction shikimate + NADP(+) = 3-dehydroshikimate + NADPH + H(+). It functions in the pathway metabolic intermediate biosynthesis; chorismate biosynthesis; chorismate from D-erythrose 4-phosphate and phosphoenolpyruvate: step 4/7. Its function is as follows. Involved in the biosynthesis of the chorismate, which leads to the biosynthesis of aromatic amino acids. Catalyzes the reversible NADPH linked reduction of 3-dehydroshikimate (DHSA) to yield shikimate (SA). This Haemophilus influenzae (strain PittGG) protein is Shikimate dehydrogenase (NADP(+)).